The sequence spans 279 residues: Phosphatidylglycerol--prolipoprotein diacylglyceryl transferase (279 aa).

The next 3 membrane-spanning stretches (helical) occupy residues 18–38, 55–75, and 89–109; these read LSVR…YFVA, IIFY…VIFQ, and IWHG…AGVI. Residue arginine 137 participates in a 1,2-diacyl-sn-glycero-3-phospho-(1'-sn-glycerol) binding. A run of 2 helical transmembrane segments spans residues 203–223 and 235–255; these read LGET…FIEG and IRVA…LIVY.

The protein belongs to the Lgt family.

It is found in the cell membrane. It catalyses the reaction L-cysteinyl-[prolipoprotein] + a 1,2-diacyl-sn-glycero-3-phospho-(1'-sn-glycerol) = an S-1,2-diacyl-sn-glyceryl-L-cysteinyl-[prolipoprotein] + sn-glycerol 1-phosphate + H(+). It functions in the pathway protein modification; lipoprotein biosynthesis (diacylglyceryl transfer). Catalyzes the transfer of the diacylglyceryl group from phosphatidylglycerol to the sulfhydryl group of the N-terminal cysteine of a prolipoprotein, the first step in the formation of mature lipoproteins. In Staphylococcus aureus (strain Mu3 / ATCC 700698), this protein is Phosphatidylglycerol--prolipoprotein diacylglyceryl transferase.